Here is a 399-residue protein sequence, read N- to C-terminus: Na(+)/H(+) antiporter NhaA (399 aa).

The next 11 helical transmembrane spans lie at alanine 14 to leucine 34, leucine 59 to valine 79, serine 95 to phenylalanine 115, alanine 124 to leucine 144, valine 154 to phenylalanine 174, threonine 177 to leucine 197, leucine 213 to isoleucine 233, phenylalanine 261 to phenylalanine 281, valine 290 to isoleucine 310, valine 331 to valine 351, and leucine 363 to valine 383.

The protein belongs to the NhaA Na(+)/H(+) (TC 2.A.33) antiporter family.

The protein resides in the cell inner membrane. The catalysed reaction is Na(+)(in) + 2 H(+)(out) = Na(+)(out) + 2 H(+)(in). Na(+)/H(+) antiporter that extrudes sodium in exchange for external protons. This is Na(+)/H(+) antiporter NhaA from Shewanella sediminis (strain HAW-EB3).